We begin with the raw amino-acid sequence, 230 residues long: Cytidylate kinase (230 aa).

12 to 20 (GPSGTGKST) lines the ATP pocket.

The protein belongs to the cytidylate kinase family. Type 1 subfamily.

The protein localises to the cytoplasm. The enzyme catalyses CMP + ATP = CDP + ADP. It catalyses the reaction dCMP + ATP = dCDP + ADP. In Corynebacterium glutamicum (strain ATCC 13032 / DSM 20300 / JCM 1318 / BCRC 11384 / CCUG 27702 / LMG 3730 / NBRC 12168 / NCIMB 10025 / NRRL B-2784 / 534), this protein is Cytidylate kinase.